A 493-amino-acid polypeptide reads, in one-letter code: Leucine-rich repeat-containing protein 14 (493 aa).

The stretch at 111–146 (KHTLRVLDMTGLLDDGVEQDPGTMSMWDCTAAVART) is one LRR 1; degenerate repeat. Residues 194-218 (RLCCRDLRAEDLPMRNTVALLQLLD) form an LRR 2; degenerate repeat. The stretch at 219–246 (AGCLRRIDLRFNNLGLRGLSVIIPHVAR) is one LRR 3; degenerate repeat. An LRR 4; degenerate repeat occupies 247–282 (FQHLASLRLHYVHGDSRQPSVDGEDNFRYFLAQMGR). 5 LRR repeats span residues 283–307 (FICL…LSTL), 308–339 (QRPL…AHLK), 340–360 (KLDL…QGLL), 364–391 (AATL…TLTR), and 392–416 (CASL…LLRD).

The protein belongs to the PRAME family. LRRC14 subfamily. Interacts with IKBKB; disrupts IKBKB-IKBKG interaction preventing I-kappa-B-kinase (IKK) core complex formation and leading to a decrease of IKBKB phosphorylation and NF-kappaB activation. Interacts with CHUK.

It localises to the cytoplasm. Functionally, negatively regulates Toll-like receptor-mediated NF-kappa-B signaling by disrupting IKK core complex formation through interaction with IKBKB. The sequence is that of Leucine-rich repeat-containing protein 14 from Rattus norvegicus (Rat).